Reading from the N-terminus, the 170-residue chain is CASP-like protein 1F1 (170 aa).

Residues 1 to 16 (MMGDNEGRRTPLLNLG) are Cytoplasmic-facing. A helical transmembrane segment spans residues 17 to 37 (VQVSMRVLIIGAAMASMWVMI). Residues 38-62 (TNREVASVYGIAFEAKYSYSSAFRY) lie on the Extracellular side of the membrane. The chain crosses the membrane as a helical span at residues 63 to 83 (LVYAQIAVCAATLFTLVWACL). The Cytoplasmic portion of the chain corresponds to 84–88 (AVRRR). A helical membrane pass occupies residues 89-109 (GLVFALFFFDLLTTLTAISAF). At 110-141 (SAAFAEGYVGKYGNKQAGWLPICGYVHVYCSR) the chain is on the extracellular side. A helical membrane pass occupies residues 142-162 (VTISLAMSFASFVLLFILTVL). Topologically, residues 163–170 (TASSARHY) are cytoplasmic.

Belongs to the Casparian strip membrane proteins (CASP) family. As to quaternary structure, homodimer and heterodimers.

It localises to the cell membrane. This Arabidopsis lyrata subsp. lyrata (Lyre-leaved rock-cress) protein is CASP-like protein 1F1.